The sequence spans 252 residues: MEKEREKQVYLARLAEQAERYDEMVEAMKAIAKMDVELTVEERNLVSVGYKNVIGARRASWRILSSIEQKEESKGHEQNVKRIKTYRQRVEDELTKICSDILSVIDEHLVPSSTTGESTVFYYKMKGDYYRYLAEFKAGDDRKEASEQSLKAYEAATATASSDLAPTHPIRLGLALNFSVFYYEILNSPERACHLAKQAFDEAIAELDSLSEESYKDSTLIMQLLRDNLTLWTSDLEEGGEHSKGDERQGEN.

This sequence belongs to the 14-3-3 family. In terms of assembly, homodimer.

The polypeptide is 14-3-3 protein 7 (TFT7) (Solanum lycopersicum (Tomato)).